The primary structure comprises 231 residues: Cytochrome c oxidase assembly factor 7 (231 aa).

5 Sel1-like repeats span residues 34–66 (PDGC…DQNE), 68–104 (SESC…NKGG), 108–145 (IDSC…DGNF), 146–182 (AASC…SLGH), and 183–218 (MWGC…DLHR).

It belongs to the hcp beta-lactamase family.

Its subcellular location is the mitochondrion intermembrane space. Its function is as follows. May be required for assembly of mitochondrial respiratory chain complexes. This is Cytochrome c oxidase assembly factor 7 (coa7) from Xenopus tropicalis (Western clawed frog).